Reading from the N-terminus, the 339-residue chain is Glycerol-3-phosphate dehydrogenase [NAD(P)+] (339 aa).

3 residues coordinate NADPH: S13, W14, and K108. K108, G139, and S141 together coordinate sn-glycerol 3-phosphate. A143 lines the NADPH pocket. Sn-glycerol 3-phosphate-binding residues include K194, D247, S257, R258, and N259. The Proton acceptor role is filled by K194. R258 provides a ligand contact to NADPH. The NADPH site is built by V282 and E284.

It belongs to the NAD-dependent glycerol-3-phosphate dehydrogenase family.

It localises to the cytoplasm. The catalysed reaction is sn-glycerol 3-phosphate + NAD(+) = dihydroxyacetone phosphate + NADH + H(+). It carries out the reaction sn-glycerol 3-phosphate + NADP(+) = dihydroxyacetone phosphate + NADPH + H(+). Its pathway is membrane lipid metabolism; glycerophospholipid metabolism. Functionally, catalyzes the reduction of the glycolytic intermediate dihydroxyacetone phosphate (DHAP) to sn-glycerol 3-phosphate (G3P), the key precursor for phospholipid synthesis. The sequence is that of Glycerol-3-phosphate dehydrogenase [NAD(P)+] from Streptococcus mutans serotype c (strain ATCC 700610 / UA159).